A 219-amino-acid chain; its full sequence is Phosphatidylserine decarboxylase proenzyme (219 aa).

Ser-188 acts as the Schiff-base intermediate with substrate; via pyruvic acid in catalysis. Ser-188 carries the pyruvic acid (Ser); by autocatalysis modification.

Belongs to the phosphatidylserine decarboxylase family. PSD-A subfamily. As to quaternary structure, heterodimer of a large membrane-associated beta subunit and a small pyruvoyl-containing alpha subunit. Pyruvate is required as a cofactor. In terms of processing, is synthesized initially as an inactive proenzyme. Formation of the active enzyme involves a self-maturation process in which the active site pyruvoyl group is generated from an internal serine residue via an autocatalytic post-translational modification. Two non-identical subunits are generated from the proenzyme in this reaction, and the pyruvate is formed at the N-terminus of the alpha chain, which is derived from the carboxyl end of the proenzyme. The post-translation cleavage follows an unusual pathway, termed non-hydrolytic serinolysis, in which the side chain hydroxyl group of the serine supplies its oxygen atom to form the C-terminus of the beta chain, while the remainder of the serine residue undergoes an oxidative deamination to produce ammonia and the pyruvoyl prosthetic group on the alpha chain.

The protein resides in the cell membrane. It catalyses the reaction a 1,2-diacyl-sn-glycero-3-phospho-L-serine + H(+) = a 1,2-diacyl-sn-glycero-3-phosphoethanolamine + CO2. It functions in the pathway phospholipid metabolism; phosphatidylethanolamine biosynthesis; phosphatidylethanolamine from CDP-diacylglycerol: step 2/2. In terms of biological role, catalyzes the formation of phosphatidylethanolamine (PtdEtn) from phosphatidylserine (PtdSer). This chain is Phosphatidylserine decarboxylase proenzyme, found in Trichlorobacter lovleyi (strain ATCC BAA-1151 / DSM 17278 / SZ) (Geobacter lovleyi).